The following is a 585-amino-acid chain: S-antigen protein (585 aa).

An N-terminal signal peptide occupies residues 1–23 (MNRILSVTLCLFFIYLYIYKTYG). A disordered region spans residues 51 to 585 (NGKGQKYEDL…NSIINMLIGM (535 aa)). Residues 59 to 85 (DLEEEKEGENDDEEDSNSEESNNDEEN) are compositionally biased toward acidic residues. Over residues 96–113 (QETHGSEDEVSNGREDKV) the composition is skewed to basic and acidic residues. A run of 56 repeats spans residues 102 to 109 (EDEVSNGR), 110 to 117 (EDKVSNGG), 118 to 125 (EDEVSNGG), 126 to 133 (EDEVSNGR), 134 to 141 (EDKVSNGG), 142 to 149 (EDEVSNGR), 150 to 157 (EDKVSNGG), 158 to 165 (EDEVSNGR), 166 to 173 (EDKVSNGG), 174 to 181 (EDEVSNGR), 182 to 189 (EDKVSNGG), 190 to 197 (EDEVSNGR), 198 to 205 (EDKVSNGR), 206 to 213 (EDKVSNGG), 214 to 221 (EDEVSNGR), 222 to 229 (EDKVSNGR), 230 to 237 (EDKVSNGG), 238 to 245 (EDEVSNGR), 246 to 253 (EDKVSNGG), 254 to 261 (EDEVSNGR), 262 to 269 (EDKVSNGG), 270 to 277 (EDEVSNGR), 278 to 285 (EDKVSNGR), 286 to 293 (EDEVSNGR), 294 to 301 (EDKVSNGG), 302 to 309 (EDEVSNGR), 310 to 317 (EDKVSNGG), 318 to 325 (EDEVSNGR), 326 to 333 (EDKVSNGR), 334 to 341 (EDKVSNGG), 342 to 349 (EDEVSNGR), 350 to 357 (EDKVSNGG), 358 to 365 (EDEVSNGR), 366 to 373 (EDKVSNGR), 374 to 381 (EDKVSNGR), 382 to 389 (EDEVSNGR), 390 to 397 (EDKVSNGG), 398 to 405 (EDEVSNGR), 406 to 413 (EDKVSNGR), 414 to 421 (EDKVSNGG), 422 to 429 (EDEVSNGR), 430 to 437 (EDKVSNGG), 438 to 445 (EDEVSNGR), 446 to 453 (EDKVSNGR), 454 to 461 (EDKVSNGR), 462 to 469 (EDKVSNGG), 470 to 477 (EDEVSNGG), 478 to 485 (EDEVSNGR), 486 to 493 (EDKVSNGG), 494 to 501 (EDEVSNGR), 502 to 509 (EDKVSNGG), 510 to 517 (EDEVSNGR), 518 to 525 (EDKVSNGG), 526 to 533 (EDEVSNGR), 534 to 541 (EDKVSNGR), and 542 to 549 (EDEVSNGR). A 56 X 8 AA tandem repeats of E-D-[EK]-V-S-N-G-[RG] region spans residues 102–549 (EDEVSNGRED…GREDEVSNGR (448 aa)). Residues 117-129 (GEDEVSNGGEDEV) show a composition bias toward acidic residues. 2 stretches are compositionally biased toward basic and acidic residues: residues 194–209 (SNGR…EDKV) and 218–233 (SNGR…EDKV). The segment covering 274–297 (SNGREDKVSNGREDEVSNGREDKV) has biased composition (basic and acidic residues). A compositionally biased stretch (basic and acidic residues) spans 322–337 (SNGREDKVSNGREDKV). 2 stretches are compositionally biased toward basic and acidic residues: residues 362-393 (SNGR…EDKV) and 402-417 (SNGR…EDKV). The segment covering 442–465 (SNGREDKVSNGREDKVSNGREDKV) has biased composition (basic and acidic residues). Residues 469–481 (GEDEVSNGGEDEV) are compositionally biased toward acidic residues. Composition is skewed to basic and acidic residues over residues 530 to 553 (SNGR…EDKG) and 560 to 569 (ELSHNSESHT). Residues 576–585 (NSIINMLIGM) are compositionally biased toward low complexity.

It localises to the parasitophorous vacuole. S antigens are soluble heat-stable proteins present in the sera of some infected individuals. The chain is S-antigen protein from Plasmodium falciparum (isolate 3D7).